Consider the following 411-residue polypeptide: Methylthioribose-1-phosphate isomerase (411 aa).

Asp-284 acts as the Proton donor in catalysis.

It belongs to the eIF-2B alpha/beta/delta subunits family. MtnA subfamily.

The protein resides in the cytoplasm. It localises to the nucleus. The catalysed reaction is 5-(methylsulfanyl)-alpha-D-ribose 1-phosphate = 5-(methylsulfanyl)-D-ribulose 1-phosphate. It participates in amino-acid biosynthesis; L-methionine biosynthesis via salvage pathway; L-methionine from S-methyl-5-thio-alpha-D-ribose 1-phosphate: step 1/6. Catalyzes the interconversion of methylthioribose-1-phosphate (MTR-1-P) into methylthioribulose-1-phosphate (MTRu-1-P). The polypeptide is Methylthioribose-1-phosphate isomerase (Komagataella phaffii (strain GS115 / ATCC 20864) (Yeast)).